Reading from the N-terminus, the 397-residue chain is Transcription factor GATA-5 (397 aa).

The interval 48–116 (GCEPSPQPPE…SAGGRDGSAY (69 aa)) is disordered. A compositionally biased stretch (low complexity) spans 87–101 (PPGATAFPFAHSPSG). Over residues 102–112 (PGSGGSAGGRD) the composition is skewed to gly residues. GATA-type zinc fingers lie at residues 189-213 (CVNC…CNAC) and 243-267 (CTNC…CNAC). The disordered stretch occupies residues 281–356 (AMKKESIQTR…ASGQEDDSLA (76 aa)). Positions 289-298 (TRKRKPKTIA) are enriched in basic residues. The span at 310 to 335 (ASASPSAVASTDSSAATSKAKPSLAS) shows a compositional bias: low complexity.

It is found in the nucleus. Functionally, transcription factor required during cardiovascular development. Plays an important role in the transcriptional program(s) that underlies smooth muscle cell diversity. Binds to the functionally important CEF-1 nuclear protein binding site in the cardiac-specific slow/cardiac troponin C transcriptional enhancer. The polypeptide is Transcription factor GATA-5 (Homo sapiens (Human)).